The following is a 557-amino-acid chain: Formate--tetrahydrofolate ligase (557 aa).

An ATP-binding site is contributed by 66 to 73 (TPAGEGKS).

The protein belongs to the formate--tetrahydrofolate ligase family.

It carries out the reaction (6S)-5,6,7,8-tetrahydrofolate + formate + ATP = (6R)-10-formyltetrahydrofolate + ADP + phosphate. It participates in one-carbon metabolism; tetrahydrofolate interconversion. The sequence is that of Formate--tetrahydrofolate ligase from Clostridium botulinum (strain Okra / Type B1).